Here is a 611-residue protein sequence, read N- to C-terminus: Probable methyltransferase PMT19 (611 aa).

Residues 1–15 (MNPSQQHLPKLCPKR) are Cytoplasmic-facing. A helical; Signal-anchor for type II membrane protein transmembrane segment spans residues 16–36 (LFLFFTPFLLFSLYYILTTIK). The Lumenal portion of the chain corresponds to 37-611 (TITISSQDRH…TILIVDNSIK (575 aa)). N-linked (GlcNAc...) asparagine glycosylation is found at asparagine 68, asparagine 97, asparagine 289, asparagine 408, asparagine 411, and asparagine 587.

The protein belongs to the methyltransferase superfamily.

Its subcellular location is the endoplasmic reticulum membrane. The sequence is that of Probable methyltransferase PMT19 from Arabidopsis thaliana (Mouse-ear cress).